The following is a 472-amino-acid chain: SURF6 homolog gldi-11 (472 aa).

Disordered stretches follow at residues L53–L73, K89–I232, K249–L350, and L414–L472. The span at K95 to K106 shows a compositional bias: low complexity. The span at R107–S132 shows a compositional bias: basic and acidic residues. Residues D133–E150 are compositionally biased toward acidic residues. Residues P151–E160 are compositionally biased toward basic and acidic residues. Acidic residues-rich tracts occupy residues S161 to E175 and E182 to E194. Residues S197 to S210 show a composition bias toward polar residues. The segment covering G212–L221 has biased composition (basic and acidic residues). Residues L274–Q285 show a composition bias toward basic residues. The span at R286–V305 shows a compositional bias: basic and acidic residues. The segment covering L414–Q426 has biased composition (basic residues). The segment covering K427–Q443 has biased composition (basic and acidic residues). Basic residues predominate over residues K459–L472.

It belongs to the SURF6 family.

It is found in the nucleus. The protein localises to the nucleoplasm. Binds to both DNA and RNA in vitro, with a stronger binding capacity for RNA. May represent a nucleolar constitutive protein involved in ribosomal biosynthesis or assembly. The sequence is that of SURF6 homolog gldi-11 from Caenorhabditis elegans.